The chain runs to 840 residues: Phosphatidylglycerol lysyltransferase (840 aa).

Topologically, residues 1 to 8 are cytoplasmic; sequence MNQEVKNK. A helical transmembrane segment spans residues 9 to 29; that stretch reads IFSILKITFATALFIFVVITL. Residues 30–52 lie on the Extracellular side of the membrane; sequence YRELSGINFKDTLVEFSKINRMS. The chain crosses the membrane as a helical span at residues 53 to 73; sequence LVLLFIGGGASLVILSMYDVI. Over 74–89 the chain is Cytoplasmic; the sequence is LSRALKMDISLGKVLR. The chain crosses the membrane as a helical span at residues 90 to 110; that stretch reads VSYIINALNAIVGFGGFIGAG. Residues 111–128 lie on the Extracellular side of the membrane; that stretch reads VRAMVYKNYTHDKKKLVH. Residues 129 to 149 form a helical membrane-spanning segment; that stretch reads FISLILISMLTGLSLLSLLIV. At 150–161 the chain is on the cytoplasmic side; the sequence is FHVFDASLILNK. The chain crosses the membrane as a helical span at residues 162-182; the sequence is ITWVRWVLYAVSLFLPLFIIY. Residues 183 to 200 are Extracellular-facing; it reads SMVRPPDKNNRYVGLYCT. Residues 201–221 traverse the membrane as a helical segment; the sequence is LVSCVEWLAAAVVLYFCGVIV. Over 222–229 the chain is Cytoplasmic; the sequence is DVHVSFMS. Residues 230–250 traverse the membrane as a helical segment; that stretch reads FIAIFIIAALSGLVSFIPGGF. Residues 251–271 lie on the Extracellular side of the membrane; the sequence is GAFDLVVLLGFKTLGVPEEKV. The helical transmembrane segment at 272 to 292 threads the bilayer; that stretch reads LLMLLLYRFAYYFVPVIIALI. Residues 293–337 are Cytoplasmic-facing; it reads LSSFEFGTSAKKYIEGSKYFIPAKDVTSFLMSYQKDIIAKIPSLS. Residues 338–358 form a helical membrane-spanning segment; sequence LAILVFFTSMIFFVNNLTIVY. Residues 359 to 369 are Extracellular-facing; the sequence is DALYDGNHLTY. A helical transmembrane segment spans residues 370–390; sequence YLLLAIHTSACLLLLLNVVGI. Residues 391–394 lie on the Cytoplasmic side of the membrane; sequence YKQS. 2 consecutive transmembrane segments (helical) span residues 395–415 and 416–436; these read RRAI…TLFT and YASY…IVAF. At 437-450 the chain is on the cytoplasmic side; the sequence is RRARRLKRPIRMRN. Residues 451 to 471 form a helical membrane-spanning segment; it reads LVAMLLFSIFILYINHIFIAG. Topologically, residues 472 to 489 are extracellular; it reads TFYALDVYTIEMHTSVLK. The helical transmembrane segment at 490–510 threads the bilayer; the sequence is YYFWITILIIAIIVGAIAWLF. The Cytoplasmic segment spans residues 511 to 840; it reads DYQFSKVRIS…SKVMRVIRHK (330 aa).

This sequence belongs to the LPG synthase family.

It localises to the cell membrane. It catalyses the reaction L-lysyl-tRNA(Lys) + a 1,2-diacyl-sn-glycero-3-phospho-(1'-sn-glycerol) = a 1,2-diacyl-sn-glycero-3-phospho-1'-(3'-O-L-lysyl)-sn-glycerol + tRNA(Lys). Catalyzes the transfer of a lysyl group from L-lysyl-tRNA(Lys) to membrane-bound phosphatidylglycerol (PG), which produces lysylphosphatidylglycerol (LPG), a major component of the bacterial membrane with a positive net charge. LPG synthesis contributes to bacterial virulence as it is involved in the resistance mechanism against cationic antimicrobial peptides (CAMP) produces by the host's immune system (defensins, cathelicidins) and by the competing microorganisms (bacteriocins). In fact, the modification of anionic phosphatidylglycerol with positively charged L-lysine results in repulsion of the peptides. In Staphylococcus aureus (strain MRSA252), this protein is Phosphatidylglycerol lysyltransferase (mprF).